The sequence spans 703 residues: Meiotic coiled-coil protein 2 (703 aa).

Polar residues-rich tracts occupy residues 1–19 (MQSIDLRLPSTSANHSISE) and 245–258 (TNVRYSNSKPSTPL). Disordered stretches follow at residues 1–29 (MQSIDLRLPSTSANHSISESLEHSKSELN), 245–265 (TNVRYSNSKPSTPLSPEDVDL), and 284–309 (ASTNNLSTNTSGTLKPYSLSSSRSSS). The 356-residue stretch at 331-686 (NPSVIPESTS…KVAYLVEKWN (356 aa)) folds into the PUM-HD domain. Pumilio repeat units follow at residues 361-396 (NVIIDKIIVSNDQQSSIFLQQKLKISSYDMKQNIVD), 397-432 (SIISQIHPLMLNRFGNFLVQRCFEHGTAPQIRQMGS), 433-468 (AMLGNMLKLATDPFGCHVVQKAIDNVTEDIKLAMMD), 469-504 (ELFLTIDVTIMHHYACHVWQKLFETQWYEYPVNVMN), 509-544 (ALRGKWHEVAVGENGSLVVQNMFENCVEKDKRECIE), 545-580 (EIIFHLDGIARGQWGNWVVQHMVENGQGEDLKRVID), 581-616 (ALLNRAVEFSIDQFASKVIEKAIKSGPKNFISLYLK), and 625-660 (RTRQPLIDIASDQYGNYLIQQIIQLGQPAEKNLVIT).

This Schizosaccharomyces pombe (strain 972 / ATCC 24843) (Fission yeast) protein is Meiotic coiled-coil protein 2 (mcp2).